The primary structure comprises 89 residues: Small ribosomal subunit protein uS15 (89 aa).

The protein belongs to the universal ribosomal protein uS15 family. In terms of assembly, part of the 30S ribosomal subunit. Forms a bridge to the 50S subunit in the 70S ribosome, contacting the 23S rRNA.

In terms of biological role, one of the primary rRNA binding proteins, it binds directly to 16S rRNA where it helps nucleate assembly of the platform of the 30S subunit by binding and bridging several RNA helices of the 16S rRNA. Forms an intersubunit bridge (bridge B4) with the 23S rRNA of the 50S subunit in the ribosome. This is Small ribosomal subunit protein uS15 from Listeria innocua serovar 6a (strain ATCC BAA-680 / CLIP 11262).